The following is a 523-amino-acid chain: Fidgetin-like protein 1 (523 aa).

Residues 114 to 154 are disordered; that stretch reads PVQQAVKSRPEGQFPESRNNSTKKIDAQQYSSESSSQSGFG. Low complexity predominate over residues 141-151; sequence QQYSSESSSQS. ATP-binding positions include Ala253 and 293-298; that span reads GTGKTL.

This sequence belongs to the AAA ATPase family. As to quaternary structure, hexamer. Requires Mg(2+) as cofactor.

The enzyme catalyses ATP + H2O = ADP + phosphate + H(+). The protein is Fidgetin-like protein 1 of Drosophila melanogaster (Fruit fly).